The sequence spans 436 residues: GTPase Der (436 aa).

EngA-type G domains lie at 4–167 (PTVA…PTEA) and 175–351 (IKFS…QSQN). GTP-binding positions include 10–17 (GRPNVGKS), 57–61 (DTGGI), 119–122 (NKVD), 181–188 (GRPNVGKS), 229–233 (DTAGM), and 294–297 (NKWD). Residues 352 to 436 (TRIPSAVLND…PIRLIARKRK (85 aa)) form the KH-like domain.

This sequence belongs to the TRAFAC class TrmE-Era-EngA-EngB-Septin-like GTPase superfamily. EngA (Der) GTPase family. In terms of assembly, associates with the 50S ribosomal subunit.

In terms of biological role, GTPase that plays an essential role in the late steps of ribosome biogenesis. The protein is GTPase Der of Streptococcus mutans serotype c (strain ATCC 700610 / UA159).